Reading from the N-terminus, the 565-residue chain is MAVKHGVDGDGSEIESRTLAVDRKSGFCESTSIFYSKREPMALPPNQFLDVTSFIASQPHRGKTVFVDAVTGRRLSFPELWLGVERVAGCLYALGVRKGNVVIILSPNSILFPIVSLSVMSLGAIITTANPINTSDEISKQIGDSRPVLAFTTCKLVSKLAAASNFNLPVVLMDDYHVPSQSYGDRVKLVGRLETMIETEPSESRVKQRVNQDDTAALLYSSGTTGTSKGVMLSHRNLIALVQAYRARFGLEQRTICTIPMCHIFGFGGFATGLIALGWTIVVLPKFDMAKLLSAVETHRSSYLSLVPPIVVAMVNGANEINSKYDLSSLHTVVAGGAPLSREVTEKFVENYPKVKILQGYGLTESTAIAASMFNKEETKRYGASGLLAPNVEGKIVDPDTGRVLGVNQTGELWIRSPTVMKGYFKNKEATASTIDSEGWLKTGDLCYIDGDGFVFVVDRLKELIKCNGYQVAPAELEALLLAHPEIADAAVIPIPDMKAGQYPMAYIVRKVGSNLSESEIMGFVAKQVSPYKKIRKVTFLASIPKNPSGKILRRELTKLTTSKL.

ATP-binding residues include Ser-221, Ser-222, Gly-223, Thr-224, Thr-225, and Lys-229. Residue Phe-265 participates in (E)-4-coumaroyl-AMP binding. Lys-286 serves as a coordination point for CoA. Positions 288 to 359 are SBD1; sequence DMAKLLSAVE…ENYPKVKILQ (72 aa). (E)-4-coumaroyl-AMP is bound by residues Gly-337, Gln-359, Gly-360, and Thr-364. 5 residues coordinate ATP: Gln-359, Gly-360, Thr-364, Asp-445, and Arg-460. Residues 360–424 form an SBD2 region; the sequence is GYGLTESTAI…IRSPTVMKGY (65 aa). Residues Lys-462 and Lys-466 each contribute to the (E)-4-coumaroyl-AMP site. Gly-469 is a CoA binding site. Lys-551 is an ATP binding site. A Microbody targeting signal motif is present at residues 563-565; that stretch reads SKL.

The protein belongs to the ATP-dependent AMP-binding enzyme family. It depends on Mg(2+) as a cofactor.

It localises to the peroxisome. The enzyme catalyses (E)-4-coumarate + ATP + CoA = (E)-4-coumaroyl-CoA + AMP + diphosphate. It carries out the reaction (E)-4-coumarate + ATP + H(+) = (E)-4-coumaroyl-AMP + diphosphate. The catalysed reaction is (E)-4-coumaroyl-AMP + CoA = (E)-4-coumaroyl-CoA + AMP + H(+). Its function is as follows. Carboxylate--CoA ligase that may use 4-coumarate as substrate. Follows a two-step reaction mechanism, wherein the carboxylate substrate first undergoes adenylation by ATP, followed by a thioesterification in the presence of CoA to yield the final CoA thioester. In Arabidopsis thaliana (Mouse-ear cress), this protein is 4-coumarate--CoA ligase-like 2.